Reading from the N-terminus, the 396-residue chain is Protein TOC75-4, chloroplastic (396 aa).

Topologically, residues Met1–Asp23 are chloroplast intermembrane. Residues Asn24 to Leu32 traverse the membrane as a beta stranded segment. Residues Asn33–Asp87 lie on the Cytoplasmic side of the membrane. The chain crosses the membrane as a beta stranded span at residues Leu88–Arg96. Residues Phe97–Arg140 are Chloroplast intermembrane-facing. A beta stranded membrane pass occupies residues Asp141–Thr148. Over Glu149–Glu156 the chain is Cytoplasmic. The beta stranded transmembrane segment at Leu157–Glu164 threads the bilayer. Over Glu165–Pro271 the chain is Chloroplast intermembrane. Residues Pro272 to Tyr280 traverse the membrane as a beta stranded segment. At Gly281–Val292 the chain is on the cytoplasmic side. Residues Phe293–Val301 form a beta stranded membrane-spanning segment. Over Arg302–Ser363 the chain is Chloroplast intermembrane. A beta stranded membrane pass occupies residues Tyr364–Leu370. The Cytoplasmic segment spans residues Gly371–Gly384. Residues Thr385–Phe392 traverse the membrane as a beta stranded segment. Residues Gly393 to Tyr396 lie on the Chloroplast intermembrane side of the membrane.

The protein belongs to the TOC75 family. In terms of assembly, part of the TOC core complex that includes a protein for the specific recognition of transit peptides surrounded by a ring composed of four proteins forming translocation channels, and four to five GTP-binding proteins providing energy. This core complex can interact with components of the TIC complex to form a larger import complex. Chloroplastic protein precursors also interacts with these complexes. Expressed ubiquitously at low levels.

The protein localises to the plastid. It localises to the chloroplast outer membrane. Functionally, mediates the insertion of proteins targeted to the outer membrane of chloroplasts. Required for the import of protein precursors into chloroplasts. Forms the voltage-dependent preprotein translocation channels (hydrophilic beta barrel) of the TOC complex in the chloroplastic outer membrane. Required for etioplast formation and/or etioplast-chloroplast transition during deetiolation. The polypeptide is Protein TOC75-4, chloroplastic (TOC75-4) (Arabidopsis thaliana (Mouse-ear cress)).